The sequence spans 150 residues: Large ribosomal subunit protein uL13 (150 aa).

Residues 129–150 (PEHPHSAQRPQTLQLNPAASSQ) form a disordered region. Residues 136–150 (QRPQTLQLNPAASSQ) show a composition bias toward polar residues.

Belongs to the universal ribosomal protein uL13 family. In terms of assembly, part of the 50S ribosomal subunit.

Its function is as follows. This protein is one of the early assembly proteins of the 50S ribosomal subunit, although it is not seen to bind rRNA by itself. It is important during the early stages of 50S assembly. The protein is Large ribosomal subunit protein uL13 of Prochlorococcus marinus (strain MIT 9303).